Here is an 81-residue protein sequence, read N- to C-terminus: uncharacterized protein (81 aa).

This sequence to yeast YDL157C.

Its subcellular location is the mitochondrion. This is an uncharacterized protein from Schizosaccharomyces pombe (strain 972 / ATCC 24843) (Fission yeast).